Consider the following 350-residue polypeptide: Very-long-chain 3-oxoacyl-CoA reductase (350 aa).

The helical transmembrane segment at 28-48 threads the bilayer; it reads SLVLLAGIGALSVGTFALRLV. NADP(+)-binding residues include Val79, Asp134, Asn161, Lys196, Tyr228, Lys232, Val261, and Ser263. The active-site Proton donor is the Tyr228. Lys232 acts as the Lowers pKa of active site Tyr in catalysis.

The protein belongs to the short-chain dehydrogenases/reductases (SDR) family.

The protein localises to the endoplasmic reticulum membrane. The catalysed reaction is a very-long-chain (3R)-3-hydroxyacyl-CoA + NADP(+) = a very-long-chain 3-oxoacyl-CoA + NADPH + H(+). Its pathway is lipid metabolism; fatty acid biosynthesis. Component of the microsomal membrane bound fatty acid elongation system, which produces the 26-carbon very long-chain fatty acids (VLCFA) from palmitate. Catalyzes the reduction of the 3-ketoacyl-CoA intermediate that is formed in each cycle of fatty acid elongation. VLCFAs serve as precursors for ceramide and sphingolipids. In Mycosarcoma maydis (Corn smut fungus), this protein is Very-long-chain 3-oxoacyl-CoA reductase.